Consider the following 472-residue polypeptide: MQKLKEIRTRFAPSPTGYLHIGGARTALFSWLYARHHQGKFVLRIEDTDQLRSTEESTRAILDAMTWLGLNWDEGPVFQAERVDIHRAMIRKLVDEDKAYYCTCTPDELEEKRKRALAEGRKPKYDGTCREKKLPPSPGTVVRFRCPQTGITVVDDLIKGKISFNNEELDDLIIQRSDGYPTYNFAVVVDDAQMGISHVIRGDDHVNNTPRQILLYQALGYDIPHFGHVPMILGADKARLSKRHGATSVMAYKDMGYLPEALVNYLVRLGWSHGDQEIFSLDELIALFGLESIGKSAAVFNPEKLLWLNQHYIKTYPEDRLLEVLQPFWKQLGIEAPDPDYGRSIVRDLRARAKTLVDMAESSTFYFNDEPAIDADAAKKFLTPEIAGHLEAIAEALATLGDYSKEGIEIFLRSLVEARAIKLKTIAQPLRIALTGKTVSPGLDDIMLTLGKERVIARIQRTVAYIRSGMAS.

The short motif at 13-23 (PSPTGYLHIGG) is the 'HIGH' region element. Zn(2+) contacts are provided by C102, C104, C129, and E131. Positions 239 to 243 (RLSKR) match the 'KMSKS' region motif. Residue K242 coordinates ATP.

Belongs to the class-I aminoacyl-tRNA synthetase family. Glutamate--tRNA ligase type 1 subfamily. As to quaternary structure, monomer. It depends on Zn(2+) as a cofactor.

The protein resides in the cytoplasm. It carries out the reaction tRNA(Glu) + L-glutamate + ATP = L-glutamyl-tRNA(Glu) + AMP + diphosphate. Catalyzes the attachment of glutamate to tRNA(Glu) in a two-step reaction: glutamate is first activated by ATP to form Glu-AMP and then transferred to the acceptor end of tRNA(Glu). This chain is Glutamate--tRNA ligase 1, found in Syntrophus aciditrophicus (strain SB).